The chain runs to 433 residues: Acetyl-CoA-benzylalcohol acetyltransferase (433 aa).

Active-site proton acceptor residues include histidine 152 and aspartate 377.

This sequence belongs to the plant acyltransferase family.

It catalyses the reaction benzyl alcohol + acetyl-CoA = benzyl acetate + CoA. The catalysed reaction is (E)-cinnamyl alcohol + acetyl-CoA = (E)-cinnamyl acetate + CoA. Functionally, involved in the biosynthesis of benzyl acetate, a major constituent of the floral scent. Can use benzylalcohol, cinnamylalcohol, 3-cis-hexene-1-ol or heptanol as substrates. Has some activity with 2-phenylethanol and 2-naphtalene-ethanol. The chain is Acetyl-CoA-benzylalcohol acetyltransferase (BEAT) from Clarkia breweri (Fairy fans).